Here is a 302-residue protein sequence, read N- to C-terminus: Methionyl-tRNA formyltransferase (302 aa).

108–111 (SLLP) is a binding site for (6S)-5,6,7,8-tetrahydrofolate.

Belongs to the Fmt family.

It carries out the reaction L-methionyl-tRNA(fMet) + (6R)-10-formyltetrahydrofolate = N-formyl-L-methionyl-tRNA(fMet) + (6S)-5,6,7,8-tetrahydrofolate + H(+). Functionally, attaches a formyl group to the free amino group of methionyl-tRNA(fMet). The formyl group appears to play a dual role in the initiator identity of N-formylmethionyl-tRNA by promoting its recognition by IF2 and preventing the misappropriation of this tRNA by the elongation apparatus. This Cereibacter sphaeroides (strain ATCC 17025 / ATH 2.4.3) (Rhodobacter sphaeroides) protein is Methionyl-tRNA formyltransferase.